Consider the following 252-residue polypeptide: 5'-nucleotidase SurE (252 aa).

A divalent metal cation contacts are provided by D8, D9, S39, and N91.

This sequence belongs to the SurE nucleotidase family. It depends on a divalent metal cation as a cofactor.

It localises to the cytoplasm. It carries out the reaction a ribonucleoside 5'-phosphate + H2O = a ribonucleoside + phosphate. Nucleotidase that shows phosphatase activity on nucleoside 5'-monophosphates. This is 5'-nucleotidase SurE from Bordetella pertussis (strain Tohama I / ATCC BAA-589 / NCTC 13251).